We begin with the raw amino-acid sequence, 476 residues long: Cysteine--tRNA ligase (476 aa).

Cys-31 provides a ligand contact to Zn(2+). A 'HIGH' region motif is present at residues 33 to 43; it reads PTVYNYAHIGN. Cys-211, His-236, and Glu-240 together coordinate Zn(2+). The 'KMSKS' region motif lies at 269 to 273; the sequence is KMSKS. Residue Lys-272 participates in ATP binding.

Belongs to the class-I aminoacyl-tRNA synthetase family. As to quaternary structure, monomer. Zn(2+) is required as a cofactor.

Its subcellular location is the cytoplasm. The enzyme catalyses tRNA(Cys) + L-cysteine + ATP = L-cysteinyl-tRNA(Cys) + AMP + diphosphate. This chain is Cysteine--tRNA ligase, found in Xanthomonas axonopodis pv. citri (strain 306).